The primary structure comprises 450 residues: Signal recognition particle 54 kDa protein (450 aa).

Residues 107–114, 188–192, and 247–250 each bind GTP; these read GIQGSGKT, DTAGR, and TKLD.

This sequence belongs to the GTP-binding SRP family. SRP54 subfamily. Part of the signal recognition particle protein translocation system, which is composed of SRP and FtsY. Archaeal SRP consists of a 7S RNA molecule of 300 nucleotides and two protein subunits: SRP54 and SRP19.

The protein localises to the cytoplasm. The catalysed reaction is GTP + H2O = GDP + phosphate + H(+). Involved in targeting and insertion of nascent membrane proteins into the cytoplasmic membrane. Binds to the hydrophobic signal sequence of the ribosome-nascent chain (RNC) as it emerges from the ribosomes. The SRP-RNC complex is then targeted to the cytoplasmic membrane where it interacts with the SRP receptor FtsY. This chain is Signal recognition particle 54 kDa protein, found in Methanococcus maripaludis (strain DSM 14266 / JCM 13030 / NBRC 101832 / S2 / LL).